We begin with the raw amino-acid sequence, 603 residues long: UvrABC system protein C (603 aa).

In terms of domain architecture, GIY-YIG spans 17 to 94 (TTSGCYKMLN…IKTHKPDYNV (78 aa)).

The protein belongs to the UvrC family. In terms of assembly, interacts with UvrB in an incision complex.

It is found in the cytoplasm. The UvrABC repair system catalyzes the recognition and processing of DNA lesions. UvrC both incises the 5' and 3' sides of the lesion. The N-terminal half is responsible for the 3' incision and the C-terminal half is responsible for the 5' incision. The protein is UvrABC system protein C of Borreliella burgdorferi (strain ATCC 35210 / DSM 4680 / CIP 102532 / B31) (Borrelia burgdorferi).